The primary structure comprises 526 residues: Cytochrome P450 4F5 (526 aa).

Cys-470 provides a ligand contact to heme.

This sequence belongs to the cytochrome P450 family. Heme serves as cofactor. High expression in liver and kidney. Lower expression in brain.

The protein resides in the endoplasmic reticulum membrane. Its subcellular location is the microsome membrane. It catalyses the reaction an organic molecule + reduced [NADPH--hemoprotein reductase] + O2 = an alcohol + oxidized [NADPH--hemoprotein reductase] + H2O + H(+). This is Cytochrome P450 4F5 (Cyp4f5) from Rattus norvegicus (Rat).